A 213-amino-acid chain; its full sequence is Neuroligin-4, X-linked (213 aa).

The disordered stretch occupies residues 1 to 56 (FQYVSTTTKVPPPDMTSFPYGTRRSPAKIWPTTKRPAITPANNPKHSKDPHKTGPE). The Extracellular portion of the chain corresponds to 1–73 (FQYVSTTTKV…TKRDYSTELS (73 aa)). The segment covering 46–55 (HSKDPHKTGP) has biased composition (basic and acidic residues). A helical membrane pass occupies residues 74-94 (VTIAVGASLLFLNILAFAALY). Residues 95–213 (YKKDKRRHET…LPHGHSTTRV (119 aa)) lie on the Cytoplasmic side of the membrane. At Ser109 the chain carries Phosphoserine.

This sequence belongs to the type-B carboxylesterase/lipase family. As to quaternary structure, homodimer. Interacts with NRXN1 in a calcium-dependent manner. Interaction with neurexins is mediated by heparan sulfate glycan modification on neurexin. Interacts through its C-terminus with DLG4/PSD-95 third PDZ domain.

It is found in the cell membrane. The protein resides in the postsynaptic density membrane. In terms of biological role, cell surface protein involved in cell-cell-interactions via its interactions with neurexin family members. The sequence is that of Neuroligin-4, X-linked (NLGN4X) from Macaca mulatta (Rhesus macaque).